Here is a 65-residue protein sequence, read N- to C-terminus: Venom protein Vn4.6 (65 aa).

The signal sequence occupies residues 1–23 (MSKIILAIFLIVLCGLIFVTVDA).

In terms of processing, contains 2 disulfide bonds. Expressed by the venom gland.

It is found in the secreted. In terms of biological role, endoparasitoid venom protein that interferes with the activation of host hemolymph prophenoloxidase. May act in conjunction with other venom proteins (such as Vn50), by competitive binding to the zymogen and thereby interrupting the enzyme. The protein is Venom protein Vn4.6 of Cotesia rubecula (Cabbage white butterfly parasite).